The primary structure comprises 558 residues: Nucleoprotein (558 aa).

The segment at 54 to 237 is binding site for the cap structure m7GTP; the sequence is MRKEKRDDKD…ITEQQSSINI (184 aa). Residues Asp382 and Glu384 each contribute to the Mg(2+) site. Mn(2+)-binding residues include Asp382 and Glu384. Zn(2+)-binding residues include Glu392, Cys499, His502, and Cys518. Asp522 lines the Mg(2+) pocket. Asp522 is a binding site for Mn(2+).

The protein belongs to the arenaviridae nucleocapsid protein family. In terms of assembly, homomultimerizes to form the nucleocapsid. Binds to viral genomic RNA. Interacts with glycoprotein G2. Interacts with protein Z; this interaction probably directs the encapsidated genome to budding sites. Interacts with protein L; this interaction does not interfere with Z-L interaction. Interacts with host IKBKE (via Protein kinase domain); the interaction inhibits IKBKE kinase activity.

The protein resides in the virion. It is found in the host cytoplasm. Functionally, encapsidates the genome, protecting it from nucleases. The encapsidated genomic RNA is termed the nucleocapsid (NC). Serves as template for viral transcription and replication. The increased presence of protein N in host cell does not seem to trigger the switch from transcription to replication as observed in other negative strain RNA viruses. Through the interaction with host IKBKE, strongly inhibits the phosphorylation and nuclear translocation of host IRF3, a protein involved in interferon activation pathway, leading to the inhibition of interferon-beta and IRF3-dependent promoters activation. Also encodes a functional 3'-5' exoribonuclease that degrades preferentially dsRNA substrates and thereby participates in the suppression of interferon induction. The chain is Nucleoprotein from Lymphocytic choriomeningitis virus (strain Armstrong) (LCMV).